Consider the following 704-residue polypeptide: MRPAVRALLACAVLGLCLADPERTVRWCTISTHEANKCASFRENVLRILESGPFVSCVKKTSHMDCIKAISNNEADAVTLDGGLVYEAGLKPNNLKPVVAEFHGTKDNPQTHYYAVAVVKKDTDFKLNELRGKKSCHTGLGRSAGWNIPMAKLYKELPDPQESIQRAAANFFSASCVPCADQSSFPKLCQLCAGKGTDKCACSNHEPYFGYSGAFKCLMEGAGDVAFVKHSTVFDNLPNPEDRKNYELLCGDNTRKSVDDYQECYLAMVPSHAVVARTVGGKEDVIWELLNHAQEHFGKDKPDNFQLFQSPHGKDLLFKDSADGFLKIPSKMDFELYLGYEYVTALQNLRESKPPDSSKDECMVKWCAIGHQERTKCDRWSGFSGGAIECETAENTEECIAKIMKGEADAMSLDGGYLYIAGKCGLVPVLAENYKTEGESCKNTPEKGYLAVAVVKTSDANINWNNLKDKKSCHTAVDRTAGWNIPMGLLYSKINNCKFDEFFSAGCAPGSPRNSSLCALCIGSEKGTGKECVPNSNERYYGYTGAFRCLVEKGDVAFVKDQTVIQNTDGNNNEAWAKNLKKENFEVLCKDGTRKPVTDAENCHLARGPNHAVVSRKDKATCVEKILNKQQDDFGKSVTDCTSNFCLFQSNSKDLLFRDDTKCLASIAKKTYDSYLGDDYVRAMTNLRQCSTSKLLEACTFHKP.

Residues 1–19 form the signal peptide; that stretch reads MRPAVRALLACAVLGLCLA. Transferrin-like domains are found at residues 25-351 and 364-689; these read VRWC…NLRE and VKWC…NLRQ. Cystine bridges form between C28–C66 and C38–C57. R42 is modified (dimethylated arginine). Residues D81 and Y113 each contribute to the Fe(3+) site. Cystine bridges form between C136/C217, C176/C192, C179/C200, C189/C202, and C250/C264. Positions 138, 142, 144, and 145 each coordinate hydrogencarbonate. Y211 contacts Fe(3+). H272 is a Fe(3+) binding site. 11 disulfides stabilise this stretch: C362–C622, C367–C399, C377–C390, C424–C699, C441–C663, C473–C549, C497–C690, C507–C521, C518–C532, C589–C603, and C641–C646. The Fe(3+) site is built by D414 and Y449. Hydrogencarbonate contacts are provided by T475, R479, A481, and G482. The N-linked (GlcNAc...) asparagine glycan is linked to N514. Y543 is a binding site for Fe(3+). H611 contributes to the Fe(3+) binding site. Phosphoserine is present on S691.

This sequence belongs to the transferrin family. As to quaternary structure, monomer. Part of a complex composed of SLC40A1/ferroportin, TF/transferrin and HEPH/hephaestin that transfers iron from cells to transferrin. Expressed by the liver and secreted in plasma.

It localises to the secreted. Functionally, transferrins are iron binding transport proteins which can bind two Fe(3+) ions in association with the binding of an anion, usually bicarbonate. It is responsible for the transport of iron from sites of absorption and heme degradation to those of storage and utilization. Serum transferrin may also have a further role in stimulating cell proliferation. In Bos taurus (Bovine), this protein is Serotransferrin (TF).